A 130-amino-acid chain; its full sequence is Small ribosomal subunit protein uS8 (130 aa).

It belongs to the universal ribosomal protein uS8 family. As to quaternary structure, part of the 30S ribosomal subunit. Contacts proteins S5 and S12.

One of the primary rRNA binding proteins, it binds directly to 16S rRNA central domain where it helps coordinate assembly of the platform of the 30S subunit. The protein is Small ribosomal subunit protein uS8 of Pseudoalteromonas atlantica (strain T6c / ATCC BAA-1087).